A 374-amino-acid polypeptide reads, in one-letter code: DNA replication and repair protein RecF (374 aa).

Residue 30-37 coordinates ATP; that stretch reads GPNAQGKT.

It belongs to the RecF family.

The protein resides in the cytoplasm. The RecF protein is involved in DNA metabolism; it is required for DNA replication and normal SOS inducibility. RecF binds preferentially to single-stranded, linear DNA. It also seems to bind ATP. This chain is DNA replication and repair protein RecF, found in Lactobacillus johnsonii (strain CNCM I-12250 / La1 / NCC 533).